Here is a 98-residue protein sequence, read N- to C-terminus: MVNSLDMNVIKYPIITDKATRLLANNQYSFIVSPKSDKPTIKAAIEYLFNVKVVKINTAHLPKKKKRIGQYLGWKAHYKKAIVTLSEGDTINLFAEEN.

The protein belongs to the universal ribosomal protein uL23 family. In terms of assembly, part of the 50S ribosomal subunit.

Its subcellular location is the plastid. The protein localises to the chloroplast. In terms of biological role, binds to 23S rRNA. The polypeptide is Large ribosomal subunit protein uL23c (rpl23) (Thalassiosira pseudonana (Marine diatom)).